A 357-amino-acid polypeptide reads, in one-letter code: Sorbitol dehydrogenase (357 aa).

Ala2 bears the N-acetylalanine mark. Cys45 is a binding site for Zn(2+). Residue Tyr51 participates in substrate binding. The Zn(2+) site is built by His70 and Glu71. Substrate is bound at residue Glu156. NAD(+)-binding residues include Ile184, Asp204, and Arg209. Ser211 and Ser225 each carry phosphoserine. NAD(+)-binding positions include 273–275 (VGL) and 297–299 (VFR). Substrate contacts are provided by Arg299 and Tyr300.

Belongs to the zinc-containing alcohol dehydrogenase family. Homotetramer. Requires Zn(2+) as cofactor.

Its subcellular location is the mitochondrion membrane. It localises to the cell projection. The protein localises to the cilium. The protein resides in the flagellum. It carries out the reaction xylitol + NAD(+) = D-xylulose + NADH + H(+). It catalyses the reaction L-iditol + NAD(+) = keto-L-sorbose + NADH + H(+). The enzyme catalyses keto-D-fructose + NADH + H(+) = D-sorbitol + NAD(+). Functionally, polyol dehydrogenase that catalyzes the reversible NAD(+)-dependent oxidation of various sugar alcohols. Is active with xylitol, L-iditol and D-sorbitol (D-glucitol) as substrates, leading to the C2-oxidized products D-xylulose, L-sorbose and D-fructose, respectively. Is a key enzyme in the polyol pathway that interconverts glucose and fructose via sorbitol, which constitutes an important alternate route for glucose metabolism. May play a role in sperm motility by using sorbitol as an alternative energy source for sperm motility. This Pongo abelii (Sumatran orangutan) protein is Sorbitol dehydrogenase (SORD).